The primary structure comprises 122 residues: Large ribosomal subunit protein uL14 (122 aa).

This sequence belongs to the universal ribosomal protein uL14 family. As to quaternary structure, part of the 50S ribosomal subunit. Forms a cluster with proteins L3 and L19. In the 70S ribosome, L14 and L19 interact and together make contacts with the 16S rRNA in bridges B5 and B8.

Its function is as follows. Binds to 23S rRNA. Forms part of two intersubunit bridges in the 70S ribosome. In Latilactobacillus sakei subsp. sakei (strain 23K) (Lactobacillus sakei subsp. sakei), this protein is Large ribosomal subunit protein uL14.